Here is a 552-residue protein sequence, read N- to C-terminus: Non-structural protein NS1 (552 aa).

The protein belongs to the orbivirus non-structural protein NS1 family.

The sequence is that of Non-structural protein NS1 (Segment-5) from Antilocapra americana (Pronghorn).